The chain runs to 313 residues: Olfactory receptor 1f45 (313 aa).

Residues 1 to 25 (MSSTNQSSVTEFLLLGLSRQPQQQQ) lie on the Extracellular side of the membrane. Asn-5 carries N-linked (GlcNAc...) asparagine glycosylation. Residues 26–50 (LLFLLFLIMYLATVLGNLLIILAIG) traverse the membrane as a helical segment. Residues 51 to 57 (TDSRLHT) are Cytoplasmic-facing. A helical membrane pass occupies residues 58–79 (PMYFFLSNLSFVDVCFSSTTVP). The Extracellular portion of the chain corresponds to 80–100 (KVLANHILGSQAISFSGCLTQ). A disulfide bridge links Cys-97 with Cys-189. The chain crosses the membrane as a helical span at residues 101-120 (LYFLAVFGNMDNFLLAVMSY). The Cytoplasmic portion of the chain corresponds to 121–139 (DRFVAICHPLHYTTKMTRQ). The chain crosses the membrane as a helical span at residues 140 to 158 (LCVLLVVGSWVVANMNCLL). Topologically, residues 159–196 (HILLMARLSFCADNMIPHFFCDGTPLLKLSCSDTHLNE) are extracellular. The helical transmembrane segment at 197–219 (LMILTEGAVVMVTPFVCILISYI) threads the bilayer. Residues 220 to 236 (HITCAVLRVSSPRGGWK) lie on the Cytoplasmic side of the membrane. The helical transmembrane segment at 237-260 (SFSTCGSHLAVVCLFYGTVIAVYF) threads the bilayer. Over 261–272 (NPSSSHLAGRDM) the chain is Extracellular. A helical membrane pass occupies residues 273 to 292 (AAAVMYAVVTPMLNPFIYSL). Topologically, residues 293-313 (RNSDMKAALRKVLAMRFPSKQ) are cytoplasmic.

The protein belongs to the G-protein coupled receptor 1 family. Olfactory epithelium.

The protein localises to the cell membrane. Functionally, odorant receptor. The polypeptide is Olfactory receptor 1f45 (Or1f45) (Rattus norvegicus (Rat)).